Consider the following 275-residue polypeptide: T-cell ecto-ADP-ribosyltransferase 2 (275 aa).

The N-terminal stretch at 1–20 (MPSNICKFFLTWWLIQQVTG) is a signal peptide. Cystine bridges form between C41/C243 and C141/C193. In terms of domain architecture, TR mART core spans 61-238 (AKLKVAWEEA…IFLDSPKRKK (178 aa)). Residues Y98, R146, and Q164 each coordinate NAD(+). Residue R146 is part of the active site. The active site involves S167. NAD(+) is bound at residue S202. R204 is subject to ADP-ribosylarginine; by autocatalysis. E209 is an active-site residue. S246 carries the GPI-anchor amidated serine lipid modification. A propeptide spans 247-275 (SAGARESCVSLFLVVLPSLLVQLLCLAEP) (removed in mature form).

Belongs to the Arg-specific ADP-ribosyltransferase family. In terms of tissue distribution, postthymic T-cells.

The protein resides in the cell membrane. It catalyses the reaction L-arginyl-[protein] + NAD(+) = N(omega)-(ADP-D-ribosyl)-L-arginyl-[protein] + nicotinamide + H(+). It carries out the reaction NAD(+) + H2O = ADP-D-ribose + nicotinamide + H(+). Has both NAD(+) glycohydrolase and ADP-ribosyltransferase activity (to a lesser extent). The sequence is that of T-cell ecto-ADP-ribosyltransferase 2 (Art2b) from Rattus norvegicus (Rat).